A 243-amino-acid chain; its full sequence is Ribosomal RNA small subunit methyltransferase G (243 aa).

Residues glycine 80, phenylalanine 85, isoleucine 132–glutamate 133, and arginine 151 each bind S-adenosyl-L-methionine.

The protein belongs to the methyltransferase superfamily. RNA methyltransferase RsmG family.

It is found in the cytoplasm. In terms of biological role, specifically methylates the N7 position of a guanine in 16S rRNA. This Synechococcus sp. (strain CC9902) protein is Ribosomal RNA small subunit methyltransferase G.